Here is a 511-residue protein sequence, read N- to C-terminus: MVTIRADEIRNIIRERIEQYNREVKILNKGTVLQVGDAIARIHGLYEVMAGELVEFEEGTIGIALNLESNNVGVVLMGDGLMIKEGSSVKATGRIAQIPVGEAYLGRVINAQANPIDGRGKISSSAFRLIEASAPGIISRRSIYEPLQTGLIAIDSMIPIGRGQRELIIGDRQTGKTAVATDTIINQQGQNVICVYVAIGQKASSVAQVVTTLQERGAMEYTIVVAETADSPATLQYLAPYTGAALAEYFMYSERHTLIIYDDLSKQAQAYRQMSLLLRRPPGREAYPGDVFYLHSRLLERAAKLSSKLGEGSMTALPIVETQSGDVSAYIPTNVISITDGQIFLSVDLFNAGIRPAINVGISVSRVGSAAQIKAMKKVAGKLKLELAQFAELEAFAQFASDLDKTSQNQLARGQRLRELLKQSQSAPLTVAEQIMTIYTGINGYLDSLPLGQVRKFLIELCTYLKTNKPRFQEILSSTKTFTEEAEDLLKEAIRDQMDRFLLKEQAEINF.

170–177 (GDRQTGKT) is a binding site for ATP.

The protein belongs to the ATPase alpha/beta chains family. In terms of assembly, F-type ATPases have 2 components, CF(1) - the catalytic core - and CF(0) - the membrane proton channel. CF(1) has five subunits: alpha(3), beta(3), gamma(1), delta(1), epsilon(1). CF(0) has four main subunits: a, b, b' and c.

It is found in the plastid membrane. The enzyme catalyses ATP + H2O + 4 H(+)(in) = ADP + phosphate + 5 H(+)(out). Produces ATP from ADP in the presence of a proton gradient across the membrane. The alpha chain is a regulatory subunit. This Cuscuta reflexa (Southern Asian dodder) protein is ATP synthase subunit alpha, plastid.